Consider the following 54-residue polypeptide: Putative ATP synthase subunit epsilon, mitochondrial (54 aa).

This sequence belongs to the eukaryotic ATPase epsilon family. F-type ATPases have 2 components, CF(1) - the catalytic core - and CF(0) - the membrane proton channel. CF(1) has five subunits: alpha(3), beta(3), gamma(1), delta(1), epsilon(1). CF(0) seems to have nine subunits: a, b, c, d, e, f, g, F6 and 8 (or A6L).

It is found in the mitochondrion. The protein resides in the mitochondrion inner membrane. In terms of biological role, mitochondrial membrane ATP synthase (F(1)F(0) ATP synthase or Complex V) produces ATP from ADP in the presence of a proton gradient across the membrane which is generated by electron transport complexes of the respiratory chain. F-type ATPases consist of two structural domains, F(1) - containing the extramembraneous catalytic core, and F(0) - containing the membrane proton channel, linked together by a central stalk and a peripheral stalk. During catalysis, ATP synthesis in the catalytic domain of F(1) is coupled via a rotary mechanism of the central stalk subunits to proton translocation. Part of the complex F(1) domain and of the central stalk which is part of the complex rotary element. Rotation of the central stalk against the surrounding alpha(3)beta(3) subunits leads to hydrolysis of ATP in three separate catalytic sites on the beta subunits. This Caenorhabditis elegans protein is Putative ATP synthase subunit epsilon, mitochondrial.